Here is a 722-residue protein sequence, read N- to C-terminus: Protein Aster-A (722 aa).

Residues 1 to 62 (MFDTTPHSGR…KSGVSGTLST (62 aa)) form a disordered region. Residues 8 to 18 (SGRSSPSSSPS) show a composition bias toward low complexity. The region spanning 93 to 160 (EDFRKLFSKL…KEVTCLKKEK (68 aa)) is the GRAM domain. The segment at 256–336 (ISPSGAADHS…DGPTSSLGPL (81 aa)) is disordered. A phosphoserine mark is found at Ser-265, Ser-269, Ser-273, and Ser-417. In terms of domain architecture, VASt spans 369-540 (SGRLLINSVF…ELAKAEKLSL (172 aa)). A disordered region spans residues 561–600 (LSWRGHRDGPQHPDPDPCTQTSMHTSGSLSSRFSEPSVDQ). Over residues 565–575 (GHRDGPQHPDP) the composition is skewed to basic and acidic residues. Polar residues predominate over residues 578-594 (CTQTSMHTSGSLSSRFS). The chain crosses the membrane as a helical span at residues 609–629 (ALVLISIVLIVLIALNALLFY).

Highly expressed in the brain.

Its subcellular location is the endoplasmic reticulum membrane. It is found in the cell membrane. It localises to the cytoplasmic vesicle. The protein resides in the autophagosome. Its function is as follows. Cholesterol transporter that mediates non-vesicular transport of cholesterol from the plasma membrane (PM) to the endoplasmic reticulum (ER). Contains unique domains for binding cholesterol and the PM, thereby serving as a molecular bridge for the transfer of cholesterol from the PM to the ER. Plays a crucial role in cholesterol homeostasis and has the unique ability to localize to the PM based on the level of membrane cholesterol. In lipid-poor conditions localizes to the ER membrane and in response to excess cholesterol in the PM is recruited to the endoplasmic reticulum-plasma membrane contact sites (EPCS) which is mediated by the GRAM domain. At the EPCS, the sterol-binding VASt/ASTER domain binds to the cholesterol in the PM and facilitates its transfer from the PM to ER. May play a role in tumor progression. Plays a role in autophagy regulation and is required for biogenesis of the autophagosome. This function in autophagy requires its cholesterol-transfer activity. The polypeptide is Protein Aster-A (Mus musculus (Mouse)).